Here is a 182-residue protein sequence, read N- to C-terminus: ATP synthase subunit b, chloroplastic (182 aa).

A helical membrane pass occupies residues 33 to 55 (VLNIMLLLFGLIYVLKQFLGSLL).

The protein belongs to the ATPase B chain family. As to quaternary structure, F-type ATPases have 2 components, F(1) - the catalytic core - and F(0) - the membrane proton channel. F(1) has five subunits: alpha(3), beta(3), gamma(1), delta(1), epsilon(1). F(0) has four main subunits: a(1), b(1), b'(1) and c(10-14). The alpha and beta chains form an alternating ring which encloses part of the gamma chain. F(1) is attached to F(0) by a central stalk formed by the gamma and epsilon chains, while a peripheral stalk is formed by the delta, b and b' chains.

It localises to the plastid. It is found in the chloroplast thylakoid membrane. In terms of biological role, f(1)F(0) ATP synthase produces ATP from ADP in the presence of a proton or sodium gradient. F-type ATPases consist of two structural domains, F(1) containing the extramembraneous catalytic core and F(0) containing the membrane proton channel, linked together by a central stalk and a peripheral stalk. During catalysis, ATP synthesis in the catalytic domain of F(1) is coupled via a rotary mechanism of the central stalk subunits to proton translocation. Component of the F(0) channel, it forms part of the peripheral stalk, linking F(1) to F(0). This Antithamnion sp. (Red alga) protein is ATP synthase subunit b, chloroplastic.